The following is a 55-amino-acid chain: Conotoxin Cal22c (55 aa).

A propeptide spanning residues 1–5 is cleaved from the precursor; the sequence is GRPSA.

In terms of processing, contains 4 disulfide bonds. As to expression, expressed by the venom duct.

It localises to the secreted. Probable neurotoxin with unknown target. Possibly targets ion channels. The sequence is that of Conotoxin Cal22c from Californiconus californicus (California cone).